We begin with the raw amino-acid sequence, 51 residues long: Lipid-anchored plasma membrane protein CPP3 (51 aa).

The disordered stretch occupies residues 1–28; sequence MRHHQNMHYAPQQQPVYVQQPPPRRESG.

It belongs to the CYSTM1 family. Post-translationally, palmitoylated near the C-terminus.

The protein resides in the cell membrane. This Saccharomyces cerevisiae (strain ATCC 204508 / S288c) (Baker's yeast) protein is Lipid-anchored plasma membrane protein CPP3.